The following is a 216-amino-acid chain: Pyrrolidone-carboxylate peptidase (216 aa).

Active-site residues include E80, C143, and H168.

The protein belongs to the peptidase C15 family. Homotetramer.

Its subcellular location is the cytoplasm. It catalyses the reaction Release of an N-terminal pyroglutamyl group from a polypeptide, the second amino acid generally not being Pro.. Its function is as follows. Removes 5-oxoproline from various penultimate amino acid residues except L-proline. This Cupriavidus necator (strain ATCC 17699 / DSM 428 / KCTC 22496 / NCIMB 10442 / H16 / Stanier 337) (Ralstonia eutropha) protein is Pyrrolidone-carboxylate peptidase.